The primary structure comprises 254 residues: Myeloblastin (254 aa).

The first 27 residues, 1 to 27 (MSGSYPSPKGIHPFLLLALVVGGAVQA), serve as a signal peptide directing secretion. The propeptide occupies 28 to 29 (SK). A Peptidase S1 domain is found at 30–250 (IVGGHEARPH…YVDWIQNVLR (221 aa)). Cysteine 58 and cysteine 74 are joined by a disulfide. Residues histidine 73 and aspartate 120 each act as charge relay system in the active site. 2 N-linked (GlcNAc...) asparagine glycosylation sites follow: asparagine 127 and asparagine 176. Disulfide bonds link cysteine 154-cysteine 211, cysteine 184-cysteine 190, and cysteine 201-cysteine 226. Serine 205 acts as the Charge relay system in catalysis. A propeptide spanning residues 251–254 (GAEP) is cleaved from the precursor.

This sequence belongs to the peptidase S1 family. Elastase subfamily. As to quaternary structure, may form dimers. Interacts with CD177; the interaction tethers PRTN3 to the cell surface; the interaction is direct. Interacts with SERPINB1. Interacts with ADGRG3.

The protein localises to the lysosome. It localises to the secreted. Its subcellular location is the cell membrane. The protein resides in the membrane raft. The enzyme catalyses Hydrolysis of proteins, including elastin, by preferential cleavage: -Ala-|-Xaa- &gt; -Val-|-Xaa-.. In terms of biological role, serine protease that degrades elastin, fibronectin, laminin, vitronectin, and collagen types I, III, and IV (in vitro). By cleaving and activating receptor F2RL1/PAR-2, enhances endothelial cell barrier function and thus vascular integrity during neutrophil transendothelial migration. May play a role in neutrophil transendothelial migration, probably when associated with CD177. Triggers inflammatory processes in neutrophils by interacting with ADGRG3 upstream of F2RL1/PAR2 activation. The sequence is that of Myeloblastin (Prtn3) from Mus musculus (Mouse).